A 367-amino-acid chain; its full sequence is Queuine tRNA-ribosyltransferase (367 aa).

The active-site Proton acceptor is Asp-92. Residues 92–96 (DSGGF), Asp-146, Gln-188, and Gly-215 each bind substrate. The tract at residues 246–252 (GVGTPKD) is RNA binding. Asp-265 acts as the Nucleophile in catalysis. Residues Cys-303, Cys-305, Cys-308, and His-334 each contribute to the Zn(2+) site.

Belongs to the queuine tRNA-ribosyltransferase family. In terms of assembly, homodimer. Within each dimer, one monomer is responsible for RNA recognition and catalysis, while the other monomer binds to the replacement base PreQ1. It depends on Zn(2+) as a cofactor.

The enzyme catalyses 7-aminomethyl-7-carbaguanine + guanosine(34) in tRNA = 7-aminomethyl-7-carbaguanosine(34) in tRNA + guanine. It functions in the pathway tRNA modification; tRNA-queuosine biosynthesis. Its function is as follows. Catalyzes the base-exchange of a guanine (G) residue with the queuine precursor 7-aminomethyl-7-deazaguanine (PreQ1) at position 34 (anticodon wobble position) in tRNAs with GU(N) anticodons (tRNA-Asp, -Asn, -His and -Tyr). Catalysis occurs through a double-displacement mechanism. The nucleophile active site attacks the C1' of nucleotide 34 to detach the guanine base from the RNA, forming a covalent enzyme-RNA intermediate. The proton acceptor active site deprotonates the incoming PreQ1, allowing a nucleophilic attack on the C1' of the ribose to form the product. After dissociation, two additional enzymatic reactions on the tRNA convert PreQ1 to queuine (Q), resulting in the hypermodified nucleoside queuosine (7-(((4,5-cis-dihydroxy-2-cyclopenten-1-yl)amino)methyl)-7-deazaguanosine). This Francisella tularensis subsp. holarctica (strain FTNF002-00 / FTA) protein is Queuine tRNA-ribosyltransferase.